A 535-amino-acid chain; its full sequence is Major glycerophosphoinositol permease GIT3 (535 aa).

The helical transmembrane segment at 49–69 (VVTSVKANSLWPAFASGAGLF) threads the bilayer. The N-linked (GlcNAc...) asparagine glycan is linked to N75. Transmembrane regions (helical) follow at residues 101-121 (NIAS…GYIS), 137-157 (LIFF…QGFF), 165-185 (FFLG…ASEF), 204-224 (AMID…IWIF), and 232-252 (LWRV…FMRL). N256 carries an N-linked (GlcNAc...) asparagine glycan. A run of 6 helical transmembrane segments spans residues 275 to 295 (WWLI…IWFI), 324 to 344 (WGWS…GAIS), 352 to 372 (LTLA…SACL), 378 to 398 (HIAG…FGPG), 419 to 439 (GIAA…FPAI), and 455 to 475 (VPFY…IFFC). Residue N532 is glycosylated (N-linked (GlcNAc...) asparagine).

It belongs to the major facilitator superfamily. Sugar transporter (TC 2.A.1.1) family.

The protein localises to the cell membrane. The enzyme catalyses sn-glycerol 3-phosphocholine(out) = sn-glycerol 3-phosphocholine(in). Functionally, glycerophosphodiester transporter that mediates uptake of glycerophosphocholine (GroPCho) with GIT4. GIT3 acts as the major GroPCho permease. Does not possess detectable glycerophosphoinositol (GroPIns) transport activity. The expanded ability to utilize GroPIns and GroPCho results from the organism's pathogenic nature and its need to occupy a variety of environments within its host organism. This possibility is buttressed by the fact that GroPIns and GroPCho are present and abundant in human fluids. In Candida albicans (strain SC5314 / ATCC MYA-2876) (Yeast), this protein is Major glycerophosphoinositol permease GIT3.